Reading from the N-terminus, the 160-residue chain is Nucleotide-binding protein CBU_0114 (160 aa).

The protein belongs to the YajQ family.

Nucleotide-binding protein. The polypeptide is Nucleotide-binding protein CBU_0114 (Coxiella burnetii (strain RSA 493 / Nine Mile phase I)).